The following is a 230-amino-acid chain: MKVLAIKLVDYREWTERLGYDREWLIQKIQNKFMMKIHEIASQYSTFPLQLRFDNFLMIVDGITNTQLIYMINDMQENLPVGIKTCLGYGKTPLEAQWNASVCLNNKEDKFKEYVDEKIAALHFDINFNTEALKYTSVYDSFLEITNIYVDLSRFLYKIGGILQYLGGDNYLGFVSTNSVNKVIEKFSDDNKIKVGIGIGQNARTAIKLATTSLEKIRNNREKTWHIEEE.

The protein belongs to the archaeal-type GTP cyclohydrolase family.

It catalyses the reaction GTP + 3 H2O = 2-amino-5-formylamino-6-(5-phospho-D-ribosylamino)pyrimidin-4(3H)-one + 2 phosphate + 2 H(+). Its function is as follows. Catalyzes the formation of 2-amino-5-formylamino-6-ribofuranosylamino-4(3H)-pyrimidinone ribonucleotide monophosphate and inorganic phosphate from GTP. Also has an independent pyrophosphate phosphohydrolase activity. This chain is GTP cyclohydrolase III, found in Saccharolobus islandicus (strain M.14.25 / Kamchatka #1) (Sulfolobus islandicus).